Consider the following 206-residue polypeptide: Outer-membrane lipoprotein LolB (206 aa).

The signal sequence occupies residues 1–18; that stretch reads MSLLKNLLAPCLALLLAG. Cys19 carries the N-palmitoyl cysteine lipid modification. A lipid anchor (S-diacylglycerol cysteine) is attached at Cys19.

The protein belongs to the LolB family. In terms of assembly, monomer.

It is found in the cell outer membrane. Plays a critical role in the incorporation of lipoproteins in the outer membrane after they are released by the LolA protein. The sequence is that of Outer-membrane lipoprotein LolB from Stutzerimonas stutzeri (strain A1501) (Pseudomonas stutzeri).